A 381-amino-acid polypeptide reads, in one-letter code: Spermidine/putrescine import ATP-binding protein PotA (381 aa).

The region spanning 19–249 (VELRKVFKVF…PESPFVADFI (231 aa)) is the ABC transporter domain. An ATP-binding site is contributed by 51-58 (GPSGCGKT).

This sequence belongs to the ABC transporter superfamily. Spermidine/putrescine importer (TC 3.A.1.11.1) family. The complex is composed of two ATP-binding proteins (PotA), two transmembrane proteins (PotB and PotC) and a solute-binding protein (PotD).

The protein resides in the cell inner membrane. It catalyses the reaction ATP + H2O + polyamine-[polyamine-binding protein]Side 1 = ADP + phosphate + polyamineSide 2 + [polyamine-binding protein]Side 1.. In terms of biological role, part of the ABC transporter complex PotABCD involved in spermidine/putrescine import. Responsible for energy coupling to the transport system. The protein is Spermidine/putrescine import ATP-binding protein PotA of Trichodesmium erythraeum (strain IMS101).